Here is a 302-residue protein sequence, read N- to C-terminus: MNQHGRSAEPGVASEGIAPYGDAHRGIAAKRKKTTTARISQMRVDGEKIAVLTAYDATFAAAADAAGVDCIMVGDSLGMVCQGRTTTVGVSLEDMLYHTRCVSQGIARADGSALIIADLPFGSYQQSNEQAIASAVQLMQAGAHMVKLEGGDWWTVDIVEFLVQRGIPVCAHLRLTPQTVSALGGYRVQGRSEEAAEKLRVDAGALDNAGASMMVLEMIPTELATSITSEMKSCATIGIGAGSGTAGQVLVMHDMLGINLGRMAKFVRNFMRDAEDVPTAFAAYVAAVKDGSFPDDKLHGFL.

Positions 75 and 118 each coordinate Mg(2+). 3-methyl-2-oxobutanoate is bound by residues 75–76 (DS), Asp-118, and Lys-147. A Mg(2+)-binding site is contributed by Glu-149. Catalysis depends on Glu-217, which acts as the Proton acceptor.

Belongs to the PanB family. In terms of assembly, homodecamer; pentamer of dimers. Mg(2+) serves as cofactor.

The protein resides in the cytoplasm. The catalysed reaction is 3-methyl-2-oxobutanoate + (6R)-5,10-methylene-5,6,7,8-tetrahydrofolate + H2O = 2-dehydropantoate + (6S)-5,6,7,8-tetrahydrofolate. The protein operates within cofactor biosynthesis; (R)-pantothenate biosynthesis; (R)-pantoate from 3-methyl-2-oxobutanoate: step 1/2. Its function is as follows. Catalyzes the reversible reaction in which hydroxymethyl group from 5,10-methylenetetrahydrofolate is transferred onto alpha-ketoisovalerate to form ketopantoate. In Zymomonas mobilis subsp. mobilis (strain ATCC 31821 / ZM4 / CP4), this protein is 3-methyl-2-oxobutanoate hydroxymethyltransferase 1.